A 702-amino-acid polypeptide reads, in one-letter code: MIHTLETTVAGRKMKVDFGKTGMLSNAAIFMSYGDTVVMINANASKAPREGIDFFPLSVDYEERLYSVGKIPGGFIKREGKPSDKSILHARSIDRPLRPLFPKGYRNDVQIVNTVLSVEQDNLPEILAINGSSLALCLSSIPFTTPVAAVSVGLVDGEFIINPTVAQRENTILDLTVCATKERVMMVEAGGQEIDEETMYSAIMFGFQECKNIVAFQEEAVAKFGKTKNEPILYKADEEVEKEVKEFAFDMIKEVMYIMDKDERNAQLDKVKEKISEEFSEKYEDKKADIAEVIYKTQKEVVRNMLLNENRRPDGRSFDEVRPISCEVGILPRTHGTGLFTRGLTQVMTVATLGALGDVQILDGIAEEASKRYMHHYNFPSYSVGEVRPLRGPGRREIGHGALAERALEPLIPSEEEFPYTIRLVSEVLSSNGSTSQASVCGSTLALLDAGVPIKRPAAGIAMGLITSDDLEKEKVITDIQGIEDFFGDMDFKVAGTEKGITSIQFDTKIAGLSDNCVRDALEGAKKARLHILGKIKECIPEPRKELSKYAPRTEIICIDPEKIRDVIGAGGKIINKIIADTNVKIEIKEDGKIFVTSNNEPEGVKKAISIIEGLTKEVVQGEIYLGKVTKTTNFGAFVEILPGKEGLVHISKLDFARVEKVEDVVSVGDEILVKVTDIDNQGRINLSRKDAIAKKEEEKDK.

Aspartate 485 and aspartate 491 together coordinate Mg(2+). Positions 552–612 (PRTEIICIDP…EGVKKAISII (61 aa)) constitute a KH domain. Positions 622-690 (GEIYLGKVTK…NQGRINLSRK (69 aa)) constitute an S1 motif domain.

Belongs to the polyribonucleotide nucleotidyltransferase family. Mg(2+) is required as a cofactor.

It localises to the cytoplasm. The catalysed reaction is RNA(n+1) + phosphate = RNA(n) + a ribonucleoside 5'-diphosphate. Involved in mRNA degradation. Catalyzes the phosphorolysis of single-stranded polyribonucleotides processively in the 3'- to 5'-direction. The chain is Polyribonucleotide nucleotidyltransferase from Clostridium botulinum (strain Kyoto / Type A2).